Here is a 491-residue protein sequence, read N- to C-terminus: 3-octaprenyl-4-hydroxybenzoate carboxy-lyase (491 aa).

Residue Asn176 coordinates Mn(2+). Residues 179–181, 193–195, and 198–199 each bind prenylated FMN; these read IYR, RWL, and RG. Glu242 is a Mn(2+) binding site. Asp291 acts as the Proton donor in catalysis.

Belongs to the UbiD family. Homohexamer. It depends on prenylated FMN as a cofactor. The cofactor is Mn(2+).

It is found in the cell membrane. The catalysed reaction is a 4-hydroxy-3-(all-trans-polyprenyl)benzoate + H(+) = a 2-(all-trans-polyprenyl)phenol + CO2. The protein operates within cofactor biosynthesis; ubiquinone biosynthesis. In terms of biological role, catalyzes the decarboxylation of 3-octaprenyl-4-hydroxy benzoate to 2-octaprenylphenol, an intermediate step in ubiquinone biosynthesis. The chain is 3-octaprenyl-4-hydroxybenzoate carboxy-lyase from Chromobacterium violaceum (strain ATCC 12472 / DSM 30191 / JCM 1249 / CCUG 213 / NBRC 12614 / NCIMB 9131 / NCTC 9757 / MK).